The primary structure comprises 152 residues: Deoxyuridine 5'-triphosphate nucleotidohydrolase (152 aa).

Residues 71–73, Asn-84, 88–90, and Met-98 contribute to the substrate site; these read RSG and LID.

Belongs to the dUTPase family. It depends on Mg(2+) as a cofactor.

The enzyme catalyses dUTP + H2O = dUMP + diphosphate + H(+). It participates in pyrimidine metabolism; dUMP biosynthesis; dUMP from dCTP (dUTP route): step 2/2. This enzyme is involved in nucleotide metabolism: it produces dUMP, the immediate precursor of thymidine nucleotides and it decreases the intracellular concentration of dUTP so that uracil cannot be incorporated into DNA. In Salmonella agona (strain SL483), this protein is Deoxyuridine 5'-triphosphate nucleotidohydrolase.